Reading from the N-terminus, the 175-residue chain is Large ribosomal subunit protein uL18 (175 aa).

This sequence belongs to the universal ribosomal protein uL18 family. Part of the 50S ribosomal subunit. Contacts the 5S and 23S rRNAs.

In terms of biological role, this is one of the proteins that bind and probably mediate the attachment of the 5S RNA into the large ribosomal subunit, where it forms part of the central protuberance. This Methanospirillum hungatei JF-1 (strain ATCC 27890 / DSM 864 / NBRC 100397 / JF-1) protein is Large ribosomal subunit protein uL18.